Consider the following 456-residue polypeptide: Exodeoxyribonuclease 7 large subunit (456 aa).

This sequence belongs to the XseA family. Heterooligomer composed of large and small subunits.

Its subcellular location is the cytoplasm. It catalyses the reaction Exonucleolytic cleavage in either 5'- to 3'- or 3'- to 5'-direction to yield nucleoside 5'-phosphates.. In terms of biological role, bidirectionally degrades single-stranded DNA into large acid-insoluble oligonucleotides, which are then degraded further into small acid-soluble oligonucleotides. This chain is Exodeoxyribonuclease 7 large subunit, found in Shigella boydii serotype 4 (strain Sb227).